The following is a 151-amino-acid chain: Large ribosomal subunit protein bL9 (151 aa).

The protein belongs to the bacterial ribosomal protein bL9 family.

In terms of biological role, binds to the 23S rRNA. The polypeptide is Large ribosomal subunit protein bL9 (Prochlorococcus marinus (strain MIT 9215)).